Here is a 237-residue protein sequence, read N- to C-terminus: uncharacterized protein (237 aa).

The tract at residues 213-237 (GQGKYLKLDSNTTENKTTKQNETGG) is disordered. Residues 223 to 237 (NTTENKTTKQNETGG) show a composition bias toward low complexity.

This is an uncharacterized protein from Methanothermobacter thermautotrophicus (Methanobacterium thermoformicicum).